Reading from the N-terminus, the 369-residue chain is MREASARAVAWSAAAGVLLVAVLLVSATIGPEPITLRTVAMAALTELAVPVGASVTMHTHAVPVVSGGLPWPALTIAYAAPLQFGVPETAQVIVGTIRLPRIVLGATVGASLAISGAVLQGFFRNPMADPSIVGVSSGAAVGAVAAITLPSVVVIGVQPAAFAGALIAAFTVYAIATKNGHTPTATLLLSGVAVQTLLGAVTSFLVVNSGREIRPAMYWLMGTLHGSRWHDVEAALPVVVVGSAVLLAYAREMNVLLAGEEDAHTLGVDVDRTKRLLLAVASVVTAAAVSFAGAIGFVGLIVPHAVRLVVGPDHRVLLPVSALTGGAFLVAADTVARATATEPPVGIITALIGAPFFLYLLRDREVRAL.

A run of 10 helical transmembrane segments spans residues 9–29 (VAWSAAAGVLLVAVLLVSATI), 62–82 (VPVVSGGLPWPALTIAYAAPL), 102–122 (IVLGATVGASLAISGAVLQGF), 130–150 (PSIVGVSSGAAVGAVAAITLP), 152–172 (VVVIGVQPAAFAGALIAAFTV), 187–207 (LLLSGVAVQTLLGAVTSFLVV), 229–249 (WHDVEAALPVVVVGSAVLLAY), 283–303 (VVTAAAVSFAGAIGFVGLIVP), 316–336 (VLLPVSALTGGAFLVAADTVA), and 341–361 (TEPPVGIITALIGAPFFLYLL).

The protein belongs to the binding-protein-dependent transport system permease family. FecCD subfamily. In terms of assembly, the complex is composed of two ATP-binding proteins (BtuD), two transmembrane proteins (BtuC) and a solute-binding protein (BtuF).

It is found in the cell membrane. Its function is as follows. Required for corrinoid utilization. Probably part of the ABC transporter complex BtuCDF involved in cobalamin (vitamin B12) import. Probably involved in the translocation of the substrate across the membrane. In Halobacterium salinarum (strain ATCC 700922 / JCM 11081 / NRC-1) (Halobacterium halobium), this protein is Cobalamin import system permease protein BtuC (btuC).